The following is a 916-amino-acid chain: Neurofilament medium polypeptide (916 aa).

Residues 1–10 (MSYTLDSLGN) show a composition bias toward polar residues. Positions 1–51 (MSYTLDSLGNPSAYRRVTETRSSFSRVSGSPSSGFRSQSWSRGSPSTVSSS) are disordered. Ser2 is subject to N-acetylserine. A head region spans residues 2-104 (SYTLDSLGNP…KLSRSNEKEQ (103 aa)). A compositionally biased stretch (low complexity) spans 21 to 44 (RSSFSRVSGSPSSGFRSQSWSRGS). Ser30 is subject to Phosphoserine. Omega-N-methylarginine is present on Arg42. Thr47 carries an O-linked (GlcNAc) threonine glycan. Residue Ser99 is modified to Phosphoserine. In terms of domain architecture, IF rod spans 101 to 412 (EKEQLQGLND…KLLEGEETRF (312 aa)). Positions 105–136 (LQGLNDRFAGYIEKVHYLEQQNKEIEAEIQAL) are coil 1A. Residues 137–149 (RQKQASHAQLGDA) are linker 1. The interval 150–248 (YDQEIRELRA…EEEVADLLAQ (99 aa)) is coil 1B. Phosphoserine is present on Ser226. A linker 12 region spans residues 249 to 265 (IQASHITVERKDYLKTD). A coil 2A region spans residues 266 to 287 (ISTALKEIRSQLESHSDQNMHQ). The segment at 288–291 (AEEW) is linker 2. The interval 292–412 (FKCRYAKLTE…KLLEGEETRF (121 aa)) is coil 2B. At Tyr320 the chain carries Phosphotyrosine. 2 positions are modified to phosphoserine: Ser346 and Ser418. The segment at 413-916 (STFAGSITGP…AIVKEVTQSD (504 aa)) is tail. Thr431 carries O-linked (GlcNAc) threonine glycosylation. Ser467 and Ser483 each carry phosphoserine. Residues 485-851 (KEEKKEAAEE…KKGGDKSEEK (367 aa)) are disordered. Over residues 493-505 (EEKEEEPEAEEEE) the composition is skewed to acidic residues. At Ser511 the chain carries Phosphoserine. Over residues 521–541 (KEEEGEKEEEEGQEEEEEEDE) the composition is skewed to acidic residues. Residues 542–561 (GAKSDQAEEGGSEKEGSSEK) show a composition bias toward basic and acidic residues. A phosphoserine mark is found at Ser545, Ser553, Ser558, and Ser559. A compositionally biased stretch (acidic residues) spans 562 to 582 (EEGEQEEGETEAEAEGEEAEA). Position 571 is a phosphothreonine (Thr571). Residues 583–614 (KEEKKVEEKSEEVATKEELVADAKVEKPEKAK) show a composition bias toward basic and acidic residues. 6 consecutive repeat copies span residues 614–626 (KSPVPKSPVEEKG), 627–639 (KSPVPKSPVEEKG), 640–652 (KSPVPKSPVEEKG), 653–665 (KSPVPKSPVEEKG), 666–678 (KSPVSKSPVEEKA), and 679–691 (KSPVPKSPVEEAK). The 6 X 13 AA approximate tandem repeats of K-S-P-V-[PS]-K-S-P-V-E-E-[KA]-[GAK] stretch occupies residues 614-691 (KSPVPKSPVE…VPKSPVEEAK (78 aa)). Phosphoserine is present on residues Ser641 and Ser646. Ser680 and Ser685 each carry phosphoserine. 3 stretches are compositionally biased toward basic and acidic residues: residues 686-701 (PVEEAKSKAEVGKGEQ), 707-742 (KEVKEAPKEEKVEKKEEKPKDVPEKKKAESPVKEEA), and 755-778 (VHLEKETKEEGKPLQQEKEKEKAG). At Ser736 the chain carries Phosphoserine. 3 positions are modified to phosphoserine: Ser783, Ser821, and Ser837. The segment covering 788 to 828 (SDKGAKGSRKEDIAVNGEVEGKEEVEQETKEKGSGREEEKG) has biased composition (basic and acidic residues). Residues 839 to 851 (ADEKKGGDKSEEK) are compositionally biased toward basic and acidic residues.

The protein belongs to the intermediate filament family. In terms of assembly, forms heterodimers with NEFL; which can further hetero-oligomerize (in vitro). Forms heterodimers with INA (in vitro). In terms of processing, there are a number of repeats of the tripeptide K-S-P, NFM is phosphorylated on a number of the serines in this motif. It is thought that phosphorylation of NFM results in the formation of interfilament cross bridges that are important in the maintenance of axonal caliber. Phosphorylation seems to play a major role in the functioning of the larger neurofilament polypeptides (NF-M and NF-H), the levels of phosphorylation being altered developmentally and coincidentally with a change in the neurofilament function. Post-translationally, phosphorylated in the head and rod regions by the PKC kinase PKN1, leading to the inhibition of polymerization.

The protein resides in the cytoplasm. The protein localises to the cytoskeleton. Its subcellular location is the cell projection. It localises to the axon. Neurofilaments usually contain three intermediate filament proteins: NEFL, NEFM, and NEFH which are involved in the maintenance of neuronal caliber. May additionally cooperate with the neuronal intermediate filament proteins PRPH and INA to form neuronal filamentous networks. In Homo sapiens (Human), this protein is Neurofilament medium polypeptide (NEFM).